Reading from the N-terminus, the 212-residue chain is MSKIEVLLADDNREFVSLLEEYISSQYDMNVIGVAYNGNEVVRLLQERVPDVLILDIIMPHLDGLAVLEQIQAMRLSPQPKIIMLTAFGQEEITKKAVELGAAYYILKPFDMEVLAQRIRQIITTKPASSFVTSVKPQSTLQVRGRNLDASITSIIHEIGVPAHIKGYLYLREAITMVYNDVELLGSITKVLYPDIAKKFNTTASHVERAIR.

The Response regulatory domain occupies 5 to 123 (EVLLADDNRE…VLAQRIRQII (119 aa)). Residues D10, D11, and D56 each coordinate Ca(2+). A 4-aspartylphosphate modification is found at D56. The segment at residues 194–212 (PDIAKKFNTTASHVERAIR) is a DNA-binding region (H-T-H motif).

Ca(2+) is required as a cofactor. Phosphorylated by KinA and KinB.

Its subcellular location is the cytoplasm. In terms of biological role, may play the central regulatory role in sporulation. It may be an element of the effector pathway responsible for the activation of sporulation genes in response to nutritional stress. Spo0A may act in concert with Spo0H (a sigma factor) to control the expression of some genes that are critical to the sporulation process. Repressor of abrB, activator of the spoIIa operon. Binds the DNA sequence 5'-TGNCGAA-3' (0A box). This chain is Stage 0 sporulation protein A (spo0A), found in Brevibacillus parabrevis.